Consider the following 237-residue polypeptide: Ribonuclease PH (237 aa).

Residues arginine 86 and 124–126 (GTR) contribute to the phosphate site.

Belongs to the RNase PH family. As to quaternary structure, homohexameric ring arranged as a trimer of dimers.

It carries out the reaction tRNA(n+1) + phosphate = tRNA(n) + a ribonucleoside 5'-diphosphate. Functionally, phosphorolytic 3'-5' exoribonuclease that plays an important role in tRNA 3'-end maturation. Removes nucleotide residues following the 3'-CCA terminus of tRNAs; can also add nucleotides to the ends of RNA molecules by using nucleoside diphosphates as substrates, but this may not be physiologically important. Probably plays a role in initiation of 16S rRNA degradation (leading to ribosome degradation) during starvation. The chain is Ribonuclease PH from Shewanella oneidensis (strain ATCC 700550 / JCM 31522 / CIP 106686 / LMG 19005 / NCIMB 14063 / MR-1).